Here is a 648-residue protein sequence, read N- to C-terminus: Serine/arginine repetitive matrix protein 3 (648 aa).

The tract at residues 1 to 44 is disordered; it reads MSSTVNNGATGMPAPPDAANGFPQPGASSGSWPRAEEELRAAEP. The CWF21 domain occupies 55-98; sequence LDHERKRRVELKCMELQEMMEEQGYSEEEIRQKVGTFRQMLMEK. Residues 99–109 show a composition bias toward basic and acidic residues; sequence EGVLTREDRPG. 2 disordered regions span residues 99 to 139 and 154 to 648; these read EGVL…DGPV and YRTK…SGGF. Basic residues-rich tracts occupy residues 168–186, 199–211, and 219–243; these read PKKK…KKRR, LRKK…KHRR, and RRKR…RKRP. Low complexity-rich tracts occupy residues 257–276 and 289–317; these read SASS…GSPS and TGSQ…NGGS. Over residues 381-409 the composition is skewed to basic residues; sequence ARRRRRRRRRRRSRSSANAPRRRGRRRTK. Low complexity-rich tracts occupy residues 414-428, 461-471, and 493-502; these read RGSS…SSSD, RPASTSPSPGT, and SWSSSRSPSK. A compositionally biased stretch (basic and acidic residues) spans 525–544; it reads LGRDKDSEGRARHAEAEAAR. The segment covering 545–560 has biased composition (basic residues); that stretch reads TRRRSRSYSPIRKRRR. The span at 579-648 shows a compositional bias: low complexity; that stretch reads IPYYRPSPSS…SRSSSESGGF (70 aa).

This sequence belongs to the CWC21 family.

May play a role in regulating breast cancer cell invasiveness. May be involved in RYBP-mediated breast cancer progression. In Mus musculus (Mouse), this protein is Serine/arginine repetitive matrix protein 3 (Srrm3).